Here is a 70-residue protein sequence, read N- to C-terminus: Large ribosomal subunit protein bL31 (70 aa).

Zn(2+)-binding residues include Cys-17, Cys-19, Cys-37, and Cys-40.

The protein belongs to the bacterial ribosomal protein bL31 family. Type A subfamily. In terms of assembly, part of the 50S ribosomal subunit. It depends on Zn(2+) as a cofactor.

In terms of biological role, binds the 23S rRNA. This chain is Large ribosomal subunit protein bL31, found in Clostridium kluyveri (strain NBRC 12016).